The primary structure comprises 388 residues: Succinate--CoA ligase [ADP-forming] subunit beta (388 aa).

One can recognise an ATP-grasp domain in the interval 9–244 (KQLFAEFGLP…PSQEDKREAH (236 aa)). ATP-binding positions include K46, 53-55 (GRG), E99, S102, and E107. 2 residues coordinate Mg(2+): N199 and D213. Substrate-binding positions include N264 and 321–323 (GIV).

The protein belongs to the succinate/malate CoA ligase beta subunit family. As to quaternary structure, heterotetramer of two alpha and two beta subunits. Mg(2+) serves as cofactor.

The catalysed reaction is succinate + ATP + CoA = succinyl-CoA + ADP + phosphate. The enzyme catalyses GTP + succinate + CoA = succinyl-CoA + GDP + phosphate. The protein operates within carbohydrate metabolism; tricarboxylic acid cycle; succinate from succinyl-CoA (ligase route): step 1/1. In terms of biological role, succinyl-CoA synthetase functions in the citric acid cycle (TCA), coupling the hydrolysis of succinyl-CoA to the synthesis of either ATP or GTP and thus represents the only step of substrate-level phosphorylation in the TCA. The beta subunit provides nucleotide specificity of the enzyme and binds the substrate succinate, while the binding sites for coenzyme A and phosphate are found in the alpha subunit. The sequence is that of Succinate--CoA ligase [ADP-forming] subunit beta from Vibrio vulnificus (strain CMCP6).